The chain runs to 323 residues: Transcriptional regulator protein Pur-beta-A (323 aa).

3 disordered regions span residues 1–34 (MADG…QELA), 100–122 (SPEQ…PRRA), and 286–323 (QERQ…VDDD). Residue alanine 2 is modified to N-acetylalanine. The segment covering 9-19 (ERGGSSGGPGG) has biased composition (gly residues). The span at 24–34 (MSREQETQELA) shows a compositional bias: basic and acidic residues. The segment at 27–257 (EQETQELATK…LRVSEVKPSY (231 aa)) is DNA-binding. The segment covering 286-305 (QERQRDKMYERRGPGDRERS) has biased composition (basic and acidic residues). Residues 313 to 323 (DDSETEDVDDD) are compositionally biased toward acidic residues.

The protein belongs to the PUR DNA-binding protein family.

Its subcellular location is the nucleus. Transcriptional regulator which can act as an activator or a repressor. In Xenopus laevis (African clawed frog), this protein is Transcriptional regulator protein Pur-beta-A (purb-a).